The chain runs to 165 residues: MYIEMIDETGQVSQEIMEQTLDLLNFAAQKTGKEEKEMSVTFVTNERSHELNLEYRDTDRPTDVISLEYKPETPILFSQEDFAADPSLAEMMAEFDAYIGELFISIDKAREQSQEYGHSFEREMGFLAVHGFLHINGYDHYTLEEEKEMFTLQEEILTAYGLTRQ.

Zn(2+) contacts are provided by His130, His134, and His140.

Belongs to the endoribonuclease YbeY family. The cofactor is Zn(2+).

The protein resides in the cytoplasm. Functionally, single strand-specific metallo-endoribonuclease involved in late-stage 70S ribosome quality control and in maturation of the 3' terminus of the 16S rRNA. The protein is Endoribonuclease YbeY of Streptococcus pyogenes serotype M28 (strain MGAS6180).